Reading from the N-terminus, the 80-residue chain is MATSGRLLCLCLVLGLVFESLGHPGARLPKDGKRAVSTRHAHDDPFAHEVNCGGFPCMFSCCENDVCMELNCEYFPSLGQ.

A signal peptide spans 1–21 (MATSGRLLCLCLVLGLVFESL). A propeptide spanning residues 22–34 (GHPGARLPKDGKR) is cleaved from the precursor.

This sequence belongs to the teretoxin M (TM) superfamily. In terms of processing, contains 3 disulfide bonds. In terms of tissue distribution, expressed by the venom duct.

Its subcellular location is the secreted. The protein is Teretoxin Tan6.1 of Terebra anilis (Auger snail).